Consider the following 147-residue polypeptide: Large ribosomal subunit protein uL15 (147 aa).

Positions 1–11 are enriched in basic and acidic residues; that stretch reads MKLHDLRPAKD. A disordered region spans residues 1–57; sequence MKLHDLRPAKDAKKKRKRVGRGTGSGRGFTSGRGSKGQNARSGGGVRPTFEGGQTPL. A compositionally biased stretch (gly residues) spans 21 to 35; the sequence is RGTGSGRGFTSGRGS.

Belongs to the universal ribosomal protein uL15 family. In terms of assembly, part of the 50S ribosomal subunit.

Functionally, binds to the 23S rRNA. The polypeptide is Large ribosomal subunit protein uL15 (Halothermothrix orenii (strain H 168 / OCM 544 / DSM 9562)).